We begin with the raw amino-acid sequence, 478 residues long: Probable serine carboxypeptidase CPVL (478 aa).

An N-terminal signal peptide occupies residues 1–22; it reads MVRAQWKVIILLILLMVIPSDG. Asn-83 and Asn-134 each carry an N-linked (GlcNAc...) asparagine glycan. The active site involves Ser-206. N-linked (GlcNAc...) asparagine glycans are attached at residues Asn-309 and Asn-350. Residues Asp-390 and His-450 contribute to the active site.

The protein belongs to the peptidase S10 family.

May be involved in the digestion of phagocytosed particles in the lysosome, participation in an inflammatory protease cascade, and trimming of peptides for antigen presentation. The chain is Probable serine carboxypeptidase CPVL (CPVL) from Rattus norvegicus (Rat).